Here is a 306-residue protein sequence, read N- to C-terminus: Pantothenate kinase (306 aa).

Position 91–98 (91–98 (GSVAVGKS)) interacts with ATP.

It belongs to the prokaryotic pantothenate kinase family.

It is found in the cytoplasm. The catalysed reaction is (R)-pantothenate + ATP = (R)-4'-phosphopantothenate + ADP + H(+). It functions in the pathway cofactor biosynthesis; coenzyme A biosynthesis; CoA from (R)-pantothenate: step 1/5. The protein is Pantothenate kinase of Streptococcus pyogenes serotype M12 (strain MGAS2096).